We begin with the raw amino-acid sequence, 206 residues long: Large ribosomal subunit protein uL4 (206 aa).

The segment at 46–95 (GNRAQKTRAEVKHSTKKPWRQKGTGRARSGMTSSPLWRKGGRAFPNKPDE) is disordered. Positions 59-70 (STKKPWRQKGTG) are enriched in basic residues.

This sequence belongs to the universal ribosomal protein uL4 family. As to quaternary structure, part of the 50S ribosomal subunit.

Functionally, one of the primary rRNA binding proteins, this protein initially binds near the 5'-end of the 23S rRNA. It is important during the early stages of 50S assembly. It makes multiple contacts with different domains of the 23S rRNA in the assembled 50S subunit and ribosome. Forms part of the polypeptide exit tunnel. The protein is Large ribosomal subunit protein uL4 of Neisseria meningitidis serogroup C (strain 053442).